A 570-amino-acid chain; its full sequence is Urease subunit alpha (570 aa).

Residues His-137, His-139, and Lys-220 each contribute to the Ni(2+) site. Lys-220 bears the N6-carboxylysine mark. His-222 is a substrate binding site. 2 residues coordinate Ni(2+): His-249 and His-275. His-323 serves as the catalytic Proton donor. Asp-363 contacts Ni(2+).

It belongs to the metallo-dependent hydrolases superfamily. Urease alpha subunit family. As to quaternary structure, heterotrimer of UreA (gamma), UreB (beta) and UreC (alpha) subunits. Three heterotrimers associate to form the active enzyme. Requires Ni cation as cofactor. Carboxylation allows a single lysine to coordinate two nickel ions.

It localises to the cytoplasm. It catalyses the reaction urea + 2 H2O + H(+) = hydrogencarbonate + 2 NH4(+). Its pathway is nitrogen metabolism; urea degradation; CO(2) and NH(3) from urea (urease route): step 1/1. This is Urease subunit alpha from Lachnoclostridium phytofermentans (strain ATCC 700394 / DSM 18823 / ISDg) (Clostridium phytofermentans).